The chain runs to 551 residues: GMP synthase [glutamine-hydrolyzing] (551 aa).

The disordered stretch occupies residues 1–28 (MTSSPTAAARTEGEAAPTVPTQVESGTA). The segment covering 19-28 (VPTQVESGTA) has biased composition (polar residues). A Glutamine amidotransferase type-1 domain is found at 37–227 (MVAILDFGSQ…VYHICGCEPE (191 aa)). C114 functions as the Nucleophile in the catalytic mechanism. Residues H201 and E203 contribute to the active site. Residues 228–426 (WTTAAFIEEA…LGLPEEIVQR (199 aa)) enclose the GMPS ATP-PPase domain. 255–261 (SGGVDSS) is a binding site for ATP.

In terms of assembly, homodimer.

It carries out the reaction XMP + L-glutamine + ATP + H2O = GMP + L-glutamate + AMP + diphosphate + 2 H(+). It participates in purine metabolism; GMP biosynthesis; GMP from XMP (L-Gln route): step 1/1. In terms of biological role, catalyzes the synthesis of GMP from XMP. In Gloeobacter violaceus (strain ATCC 29082 / PCC 7421), this protein is GMP synthase [glutamine-hydrolyzing].